A 150-amino-acid polypeptide reads, in one-letter code: Endoribonuclease YbeY (150 aa).

Zn(2+)-binding residues include His108, His112, and His118.

The protein belongs to the endoribonuclease YbeY family. Requires Zn(2+) as cofactor.

Its subcellular location is the cytoplasm. In terms of biological role, single strand-specific metallo-endoribonuclease involved in late-stage 70S ribosome quality control and in maturation of the 3' terminus of the 16S rRNA. This is Endoribonuclease YbeY from Methylococcus capsulatus (strain ATCC 33009 / NCIMB 11132 / Bath).